The sequence spans 20 residues: Cicerin (20 aa).

A disordered region spans residues 1-20 (ARCENFADSYRQPPISSSQT).

Has antifungal activity against B.cinerea, F.oxysporum and M.arachidicola. Inhibits cell-free translation in rabbit reticulocyte lysate system. The polypeptide is Cicerin (Cicer arietinum (Chickpea)).